The primary structure comprises 85 residues: Putative plasmid stability protein y4jJ (85 aa).

A compositionally biased stretch (basic and acidic residues) spans 66 to 78 (EAEHFNQLRDKTP). A disordered region spans residues 66-85 (EAEHFNQLRDKTPAEPMSFE).

It to P.syringae pv tomato plasmid stability protein StbC.

Involved in plasmid stability. The chain is Putative plasmid stability protein y4jJ from Sinorhizobium fredii (strain NBRC 101917 / NGR234).